Reading from the N-terminus, the 173-residue chain is Photosystem I assembly protein Ycf3 (173 aa).

3 TPR repeats span residues 35 to 68 (AYVYYRDGLSAQNDGDYAEALENYDEALKLEDNP), 72 to 105 (GETLKNMAIIYMSNGEEERAIETYRRALDENSNQ), and 120 to 153 (GRIAEEDGRQDDADRWFDQAAEAWTQAVRLNPGG).

Belongs to the Ycf3 family.

Its subcellular location is the cellular thylakoid membrane. Its function is as follows. Essential for the assembly of the photosystem I (PSI) complex. May act as a chaperone-like factor to guide the assembly of the PSI subunits. The chain is Photosystem I assembly protein Ycf3 from Parasynechococcus marenigrum (strain WH8102).